The following is a 351-amino-acid chain: MTIAVGRAPQRGWFDVLDDWLKRDRFVFVGWSGILLFPTAYLAIGGWLTGTTFVTSWYTHGIASSYLEGCNFLTAAVSTPADAMGHSLLLLWGPEAQGDFVRWCQLGGLWAFVALHGAFALIGFMLRQFEIARLVGIRPYNAIAFSGPIAVFVSVFLMYPLGQSSWFFAPSFGVAAIFRFLLFLQGFHNWTLNPFHMMGVAGILGGALLCAIHGATVENTLFEDGEQANTFKAFEPTQEEETYSMVTANRFWSQIFGIAFSNKRWLHFFMLFVPVMGLWTSSIGIIGLALNLRAYDFVSQEIRAAEDPEFETFYTKNILLNEGLRAWMAPADQPHENFVFPEEVLPRGNAL.

Residues 39–59 (TAYLAIGGWLTGTTFVTSWYT) traverse the membrane as a helical segment. A chlorophyll a-binding site is contributed by histidine 116. Residues 123–139 (GFMLRQFEIARLVGIRP) traverse the membrane as a helical segment. Pheophytin a is bound by residues glutamine 128 and asparagine 141. Residues 151 to 164 (VFVSVFLMYPLGQS) form a helical membrane-spanning segment. Histidine 196 serves as a coordination point for chlorophyll a. Residues 206–226 (GALLCAIHGATVENTLFEDGE) form a helical membrane-spanning segment. The a plastoquinone site is built by histidine 213 and phenylalanine 260. A Fe cation-binding site is contributed by histidine 213. Position 267 (histidine 267) interacts with Fe cation. A helical transmembrane segment spans residues 277–293 (GLWTSSIGIIGLALNLR).

This sequence belongs to the reaction center PufL/M/PsbA/D family. PSII is composed of 1 copy each of membrane proteins PsbA, PsbB, PsbC, PsbD, PsbE, PsbF, PsbH, PsbI, PsbJ, PsbK, PsbL, PsbM, PsbT, PsbX, PsbY, PsbZ, Psb30/Ycf12, peripheral proteins PsbO, CyanoQ (PsbQ), PsbU, PsbV and a large number of cofactors. It forms dimeric complexes. Requires The D1/D2 heterodimer binds P680, chlorophylls that are the primary electron donor of PSII, and subsequent electron acceptors. It shares a non-heme iron and each subunit binds pheophytin, quinone, additional chlorophylls, carotenoids and lipids. There is also a Cl(-1) ion associated with D1 and D2, which is required for oxygen evolution. The PSII complex binds additional chlorophylls, carotenoids and specific lipids. as cofactor.

It localises to the cellular thylakoid membrane. The enzyme catalyses 2 a plastoquinone + 4 hnu + 2 H2O = 2 a plastoquinol + O2. Functionally, photosystem II (PSII) is a light-driven water:plastoquinone oxidoreductase that uses light energy to abstract electrons from H(2)O, generating O(2) and a proton gradient subsequently used for ATP formation. It consists of a core antenna complex that captures photons, and an electron transfer chain that converts photonic excitation into a charge separation. The D1/D2 (PsbA/PsbD) reaction center heterodimer binds P680, the primary electron donor of PSII as well as several subsequent electron acceptors. D2 is needed for assembly of a stable PSII complex. This Synechococcus sp. (strain WH7803) protein is Photosystem II D2 protein.